Consider the following 251-residue polypeptide: Triosephosphate isomerase (251 aa).

9-11 (NWK) lines the substrate pocket. His-95 acts as the Electrophile in catalysis. Catalysis depends on Glu-167, which acts as the Proton acceptor. Substrate-binding positions include Gly-173, Ser-213, and 234–235 (GG).

The protein belongs to the triosephosphate isomerase family. As to quaternary structure, homodimer.

It localises to the cytoplasm. The enzyme catalyses D-glyceraldehyde 3-phosphate = dihydroxyacetone phosphate. Its pathway is carbohydrate biosynthesis; gluconeogenesis. It functions in the pathway carbohydrate degradation; glycolysis; D-glyceraldehyde 3-phosphate from glycerone phosphate: step 1/1. Its function is as follows. Involved in the gluconeogenesis. Catalyzes stereospecifically the conversion of dihydroxyacetone phosphate (DHAP) to D-glyceraldehyde-3-phosphate (G3P). The protein is Triosephosphate isomerase of Pediococcus pentosaceus (strain ATCC 25745 / CCUG 21536 / LMG 10740 / 183-1w).